The primary structure comprises 355 residues: Holliday junction branch migration complex subunit RuvB (355 aa).

The segment at 4-190 (TDKLAAERII…FGIVARLEFY (187 aa)) is large ATPase domain (RuvB-L). Residues Leu-29, Arg-30, Gly-71, Lys-74, Thr-75, Thr-76, 137-139 (EDY), Arg-180, Tyr-190, and Arg-227 contribute to the ATP site. Thr-75 is a binding site for Mg(2+). The small ATPAse domain (RuvB-S) stretch occupies residues 191–261 (DADQLSRIVQ…IADAALAMLD (71 aa)). Positions 264-355 (PVGFDLMDRK…QSIWDTPDAQ (92 aa)) are head domain (RuvB-H). The DNA site is built by Arg-300, Arg-319, and Arg-324.

The protein belongs to the RuvB family. Homohexamer. Forms an RuvA(8)-RuvB(12)-Holliday junction (HJ) complex. HJ DNA is sandwiched between 2 RuvA tetramers; dsDNA enters through RuvA and exits via RuvB. An RuvB hexamer assembles on each DNA strand where it exits the tetramer. Each RuvB hexamer is contacted by two RuvA subunits (via domain III) on 2 adjacent RuvB subunits; this complex drives branch migration. In the full resolvosome a probable DNA-RuvA(4)-RuvB(12)-RuvC(2) complex forms which resolves the HJ.

The protein resides in the cytoplasm. The enzyme catalyses ATP + H2O = ADP + phosphate + H(+). The RuvA-RuvB-RuvC complex processes Holliday junction (HJ) DNA during genetic recombination and DNA repair, while the RuvA-RuvB complex plays an important role in the rescue of blocked DNA replication forks via replication fork reversal (RFR). RuvA specifically binds to HJ cruciform DNA, conferring on it an open structure. The RuvB hexamer acts as an ATP-dependent pump, pulling dsDNA into and through the RuvAB complex. RuvB forms 2 homohexamers on either side of HJ DNA bound by 1 or 2 RuvA tetramers; 4 subunits per hexamer contact DNA at a time. Coordinated motions by a converter formed by DNA-disengaged RuvB subunits stimulates ATP hydrolysis and nucleotide exchange. Immobilization of the converter enables RuvB to convert the ATP-contained energy into a lever motion, pulling 2 nucleotides of DNA out of the RuvA tetramer per ATP hydrolyzed, thus driving DNA branch migration. The RuvB motors rotate together with the DNA substrate, which together with the progressing nucleotide cycle form the mechanistic basis for DNA recombination by continuous HJ branch migration. Branch migration allows RuvC to scan DNA until it finds its consensus sequence, where it cleaves and resolves cruciform DNA. This is Holliday junction branch migration complex subunit RuvB from Burkholderia multivorans (strain ATCC 17616 / 249).